Reading from the N-terminus, the 408-residue chain is Aminoacylase-1 (408 aa).

His-80 is a binding site for Zn(2+). Residue Asp-82 is part of the active site. Position 113 (Asp-113) interacts with Zn(2+). The active-site Proton acceptor is Glu-147. Residues Glu-148, Glu-175, and His-373 each coordinate Zn(2+).

This sequence belongs to the peptidase M20A family. Homodimer. Interacts with SPHK1. The cofactor is Zn(2+).

It localises to the cytoplasm. It catalyses the reaction an N-acyl-L-amino acid + H2O = an L-alpha-amino acid + a carboxylate. The catalysed reaction is N-acetyl-L-methionine + H2O = L-methionine + acetate. It carries out the reaction N-acetyl-L-glutamine + H2O = L-glutamine + acetate. Its function is as follows. Catalyzes the hydrolysis of N-acetylated amino acids to acetate and free amino acids. This chain is Aminoacylase-1 (ACY1), found in Pongo abelii (Sumatran orangutan).